Consider the following 305-residue polypeptide: Homoserine O-acetyltransferase (305 aa).

Residue Cys-142 is the Acyl-thioester intermediate of the active site. Substrate contacts are provided by Lys-163 and Ser-192. Residue His-235 is the Proton acceptor of the active site. Glu-237 is an active-site residue. Arg-249 is a binding site for substrate.

The protein belongs to the MetA family.

It is found in the cytoplasm. It catalyses the reaction L-homoserine + acetyl-CoA = O-acetyl-L-homoserine + CoA. Its pathway is amino-acid biosynthesis; L-methionine biosynthesis via de novo pathway; O-acetyl-L-homoserine from L-homoserine: step 1/1. In terms of biological role, transfers an acetyl group from acetyl-CoA to L-homoserine, forming acetyl-L-homoserine. The protein is Homoserine O-acetyltransferase of Cereibacter sphaeroides (strain KD131 / KCTC 12085) (Rhodobacter sphaeroides).